Here is a 215-residue protein sequence, read N- to C-terminus: Myelin protein zero-like protein 2 (215 aa).

The signal sequence occupies residues M1–A26. One can recognise an Ig-like V-type domain in the interval V27–S141. At V27–L154 the chain is on the extracellular side. N-linked (GlcNAc...) asparagine glycosylation is found at N39 and N118. A disulfide bond links C47 and C123. Residues A155–F175 form a helical membrane-spanning segment. The Cytoplasmic portion of the chain corresponds to Q176–D215.

This sequence belongs to the myelin P0 protein family.

The protein resides in the membrane. In terms of biological role, mediates homophilic cell-cell adhesion. The polypeptide is Myelin protein zero-like protein 2 (MPZL2) (Bos taurus (Bovine)).